The sequence spans 257 residues: V-type proton ATPase subunit D (257 aa).

Positions 215-257 are disordered; sequence KEQEAAQKALEGPGPGEDAAHSENNPPRNLLASEEDNLPVLFN.

This sequence belongs to the V-ATPase D subunit family. V-ATPase is a heteromultimeric enzyme made up of two complexes: the ATP-hydrolytic V1 complex and the proton translocation V0 complex. The V1 complex consists of three catalytic AB heterodimers that form a heterohexamer, three peripheral stalks each consisting of EG heterodimers, one central rotor including subunits D and F, and the regulatory subunits C and H. The proton translocation complex V0 consists of the proton transport subunit a, a ring of proteolipid subunits c9c'', rotary subunit d, subunits e and f, and the accessory subunits vah-19/Ac45 and vah-20/PRR.

Its function is as follows. Subunit of the V1 complex of vacuolar(H+)-ATPase (V-ATPase), a multisubunit enzyme composed of a peripheral complex (V1) that hydrolyzes ATP and a membrane integral complex (V0) that translocates protons. V-ATPase is responsible for acidifying and maintaining the pH of intracellular compartments and in some cell types, is targeted to the plasma membrane, where it is responsible for acidifying the extracellular environment. The protein is V-type proton ATPase subunit D of Caenorhabditis elegans.